The chain runs to 442 residues: Membrane sensor protein UhpC (442 aa).

Over 1–30 (MLSFLKAPANAPLITDKHEVDARYRYWRRH) the chain is Cytoplasmic. The helical transmembrane segment at 31 to 51 (ILITIWLGYALFYFTRKSFNA) threads the bilayer. Residues 52 to 66 (AAPEILASGILTRSD) lie on the Periplasmic side of the membrane. The chain crosses the membrane as a helical span at residues 67–87 (IGLLATLFYITYGVSKFVSGI). Residues 88-95 (VSDRSNAR) are Cytoplasmic-facing. The chain crosses the membrane as a helical span at residues 96 to 118 (YFMGIGLIATGVVNILFGFSTSL). Residues 119–121 (WAF) are Periplasmic-facing. The chain crosses the membrane as a helical span at residues 122–144 (ALLWALNAFFQGFGSPVCARLLT). Over 145–162 (AWYSRTERGGWWALWNTA) the chain is Cytoplasmic. The helical transmembrane segment at 163 to 183 (HNVGGALIPLVMAAVALHYGW) threads the bilayer. Residue Arg-184 is a topological domain, periplasmic. The chain crosses the membrane as a helical span at residues 185 to 205 (VGMMVAGLLAIGVGMVLCWRL). Topologically, residues 206–244 (RDRPQAIGLPPVGDWRHDALEVAQQQEGAGLSRKEILAK) are cytoplasmic. Residues 245–265 (YVLLNPYIWLLSLCYVLVYVV) form a helical membrane-spanning segment. Residues 266–289 (RAAINDWGNLYMSETLGVDLVTAN) are Periplasmic-facing. Residues 290-310 (TAVSMFELGGFIGALVAGWGS) traverse the membrane as a helical segment. The Cytoplasmic portion of the chain corresponds to 311–322 (DKLFNGNRGPMN). The helical transmembrane segment at 323–343 (LIFAAGILLSVGSLWLMPFAS) threads the bilayer. The Periplasmic portion of the chain corresponds to 344 to 347 (YVMQ). Residues 348–368 (AACFFTTGFFVFGPQMLIGMA) traverse the membrane as a helical segment. Over 369–379 (AAECSHKEAAG) the chain is Cytoplasmic. A helical membrane pass occupies residues 380–400 (AATGFVGLFAYLGASLSGWPL). Over 401 to 410 (AKVLEIWHWT) the chain is Periplasmic. The helical transmembrane segment at 411-431 (GFFAVIAIAAGISALLLLPFL) threads the bilayer. Residues 432–442 (NAQAPRETHEA) lie on the Cytoplasmic side of the membrane.

It belongs to the major facilitator superfamily. Organophosphate:Pi antiporter (OPA) (TC 2.A.1.4) family.

The protein resides in the cell inner membrane. Functionally, part of the UhpABC signaling cascade that controls the expression of the hexose phosphate transporter UhpT. UhpC senses external glucose-6-phosphate and interacts with the histidine kinase UhpB, leading to the stimulation of the autokinase activity of UhpB. This chain is Membrane sensor protein UhpC (uhpC), found in Salmonella typhimurium (strain LT2 / SGSC1412 / ATCC 700720).